The primary structure comprises 96 residues: Phosphoribosyl-ATP pyrophosphatase (96 aa).

It belongs to the PRA-PH family.

It is found in the cytoplasm. The enzyme catalyses 1-(5-phospho-beta-D-ribosyl)-ATP + H2O = 1-(5-phospho-beta-D-ribosyl)-5'-AMP + diphosphate + H(+). It functions in the pathway amino-acid biosynthesis; L-histidine biosynthesis; L-histidine from 5-phospho-alpha-D-ribose 1-diphosphate: step 2/9. In Methanococcus maripaludis (strain DSM 14266 / JCM 13030 / NBRC 101832 / S2 / LL), this protein is Phosphoribosyl-ATP pyrophosphatase.